A 320-amino-acid polypeptide reads, in one-letter code: ATP-dependent 6-phosphofructokinase (320 aa).

G12 contacts ATP. 22–26 (RGVVR) contacts ADP. ATP is bound by residues 73-74 (RF) and 103-106 (GDGS). Position 104 (D104) interacts with Mg(2+). 126-128 (TID) contributes to the substrate binding site. The active-site Proton acceptor is the D128. R155 contacts ADP. Substrate is bound by residues R163 and 170–172 (MGR). ADP-binding positions include 186 to 188 (GCE), K212, and 214 to 216 (KKH). Substrate is bound by residues E223, R244, and 250–253 (HIQR).

The protein belongs to the phosphofructokinase type A (PFKA) family. ATP-dependent PFK group I subfamily. Prokaryotic clade 'B1' sub-subfamily. Homotetramer. Mg(2+) serves as cofactor.

It is found in the cytoplasm. It carries out the reaction beta-D-fructose 6-phosphate + ATP = beta-D-fructose 1,6-bisphosphate + ADP + H(+). It participates in carbohydrate degradation; glycolysis; D-glyceraldehyde 3-phosphate and glycerone phosphate from D-glucose: step 3/4. Allosterically activated by ADP and other diphosphonucleosides, and allosterically inhibited by phosphoenolpyruvate. Functionally, catalyzes the phosphorylation of D-fructose 6-phosphate to fructose 1,6-bisphosphate by ATP, the first committing step of glycolysis. The sequence is that of ATP-dependent 6-phosphofructokinase from Photobacterium profundum (strain SS9).